The sequence spans 430 residues: Trigger factor (430 aa).

Residues 157–242 (GDLVALETWS…AVEVSEPVLP (86 aa)) form the PPIase FKBP-type domain.

This sequence belongs to the FKBP-type PPIase family. Tig subfamily.

It is found in the cytoplasm. The catalysed reaction is [protein]-peptidylproline (omega=180) = [protein]-peptidylproline (omega=0). In terms of biological role, involved in protein export. Acts as a chaperone by maintaining the newly synthesized protein in an open conformation. Functions as a peptidyl-prolyl cis-trans isomerase. The protein is Trigger factor of Xanthomonas oryzae pv. oryzae (strain MAFF 311018).